We begin with the raw amino-acid sequence, 259 residues long: 12alpha-hydroxysteroid dehydrogenase (259 aa).

Tyrosine 162 (proton acceptor) is an active-site residue.

This sequence belongs to the short-chain dehydrogenases/reductases (SDR) family. In terms of assembly, homotetramer.

It carries out the reaction cholate + NADP(+) = 3alpha,7alpha-dihydroxy-12-oxo-5beta-cholanate + NADPH + H(+). The catalysed reaction is deoxycholate + NADP(+) = 12-dehydrodeoxycholate + NADPH + H(+). Catalyzes the oxidation of the 12alpha-hydroxy group of bile acids, like cholate and deoxycholate. Is also able to catalyze the reverse reaction in vitro. Is likely involved in an epimerization pathway of bile acids that converts hydroxy groups from alpha to beta positions via stable oxo-intermediates, which occurs in the human gut. This chain is 12alpha-hydroxysteroid dehydrogenase, found in Clostridium sp. (strain ATCC 29733 / VPI C48-50).